The sequence spans 464 residues: Soluble pyridine nucleotide transhydrogenase (464 aa).

35–44 (DSRRQVGGNC) is a binding site for FAD.

The protein belongs to the class-I pyridine nucleotide-disulfide oxidoreductase family. FAD serves as cofactor.

The protein resides in the cytoplasm. The enzyme catalyses NAD(+) + NADPH = NADH + NADP(+). Functionally, conversion of NADPH, generated by peripheral catabolic pathways, to NADH, which can enter the respiratory chain for energy generation. This is Soluble pyridine nucleotide transhydrogenase from Pseudomonas savastanoi pv. phaseolicola (strain 1448A / Race 6) (Pseudomonas syringae pv. phaseolicola (strain 1448A / Race 6)).